Here is a 370-residue protein sequence, read N- to C-terminus: DNA replication and repair protein RecF (370 aa).

Position 30-37 (30-37) interacts with ATP; that stretch reads GENAQGKT.

It belongs to the RecF family.

The protein resides in the cytoplasm. Functionally, the RecF protein is involved in DNA metabolism; it is required for DNA replication and normal SOS inducibility. RecF binds preferentially to single-stranded, linear DNA. It also seems to bind ATP. This chain is DNA replication and repair protein RecF, found in Listeria welshimeri serovar 6b (strain ATCC 35897 / DSM 20650 / CCUG 15529 / CIP 8149 / NCTC 11857 / SLCC 5334 / V8).